Reading from the N-terminus, the 75-residue chain is Putative DNA-directed RNA polymerase subunit omega (75 aa).

The protein belongs to the RNA polymerase subunit omega family.

Its subcellular location is the plastid. The protein resides in the chloroplast. The enzyme catalyses RNA(n) + a ribonucleoside 5'-triphosphate = RNA(n+1) + diphosphate. In terms of biological role, may be involved in RNA polymerase activity. In Mesostigma viride (Green alga), this protein is Putative DNA-directed RNA polymerase subunit omega (rpoZ).